The chain runs to 1028 residues: Receptor-type guanylate cyclase gcy-13 (1028 aa).

6 N-linked (GlcNAc...) asparagine glycosylation sites follow: N58, N156, N324, N337, N377, and N394. A helical transmembrane segment spans residues 438–458; it reads IVVIVAVIIVLCCAAAAIAAF. Residues 459–1028 are Cytoplasmic-facing; the sequence is LVIKARRDEE…WLLGMKEESA (570 aa). Residues 491 to 511 form a disordered region; that stretch reads ESHHSSRSLQSNSTTTTGTTG. Residues 497–511 are compositionally biased toward low complexity; it reads RSLQSNSTTTTGTTG. The region spanning 499–770 is the Protein kinase domain; it reads LQSNSTTTTG…DMVNKLMKNM (272 aa). Residues 786 to 817 are a coiled coil; the sequence is SVLEKHASSLEDEVQERMKELVEEKKKSDILL. A Guanylate cyclase domain is found at 844-974; sequence TIFFSDVVGF…DTVNTASRME (131 aa).

This sequence belongs to the adenylyl cyclase class-4/guanylyl cyclase family. In terms of tissue distribution, expressed bilaterally in RIM interneurons.

Its subcellular location is the cell membrane. It carries out the reaction GTP = 3',5'-cyclic GMP + diphosphate. Its function is as follows. Guanylate cyclase involved in the production of the second messenger cGMP. The chain is Receptor-type guanylate cyclase gcy-13 from Caenorhabditis elegans.